The chain runs to 440 residues: C4-dicarboxylate transport protein (440 aa).

Helical transmembrane passes span 8 to 28 (LYLQ…LFPA), 40 to 60 (FIKL…VTGI), 74 to 94 (LKGL…GLVV), 147 to 167 (GDIL…AALK), 187 to 207 (IVGF…AFTV), 221 to 241 (LIAC…GLVL), 288 to 308 (VVGL…SIYL), and 354 to 374 (AATL…LLGV). Residues 419 to 440 (EEVEPANEPEPPAIPAGAGLHG) are disordered.

The protein belongs to the dicarboxylate/amino acid:cation symporter (DAACS) (TC 2.A.23) family.

The protein localises to the cell inner membrane. Functionally, responsible for the transport of dicarboxylates such as succinate, fumarate, and malate from the periplasm across the membrane. In Anaeromyxobacter sp. (strain K), this protein is C4-dicarboxylate transport protein.